We begin with the raw amino-acid sequence, 636 residues long: Transcriptional repressor CTCFL (636 aa).

Disordered regions lie at residues Lys17–Val38, Glu160–Glu195, and Leu222–Phe257. The segment covering Glu160–Glu170 has biased composition (acidic residues). Residues Ala242 to Lys251 are compositionally biased toward basic residues. 11 C2H2-type zinc fingers span residues Phe257–His279, His285–His307, His313–His336, Phe342–His364, Phe370–His392, Tyr398–His421, Tyr428–His451, Met458–His480, Phe486–His508, Phe514–His537, and His546–His572. The disordered stretch occupies residues Gln562–Gly624. The segment covering Cys568–Pro583 has biased composition (basic and acidic residues).

The protein belongs to the CTCF zinc-finger protein family. In terms of assembly, interacts with histones, PRMT7 and SETD1A. Interacts (via N-terminus) with BAG6/BAT3. As to expression, testis-specific.

It is found in the cytoplasm. The protein resides in the nucleus. In terms of biological role, testis-specific DNA binding protein responsible for insulator function, nuclear architecture and transcriptional control, which probably acts by recruiting epigenetic chromatin modifiers. Plays a key role in gene imprinting in male germline, by participating in the establishment of differential methylation at the IGF2/H19 imprinted control region (ICR). Directly binds the unmethylated H19 ICR and recruits the PRMT7 methyltransferase, leading to methylate histone H4 'Arg-3' to form H4R3sme2. This probably leads to recruit de novo DNA methyltransferases at these sites. Seems to act as tumor suppressor. In association with DNMT1 and DNMT3B, involved in activation of BAG1 gene expression by binding to its promoter. Required for dimethylation of H3 lysine 4 (H3K4me2) of MYC and BRCA1 promoters. In Mus musculus (Mouse), this protein is Transcriptional repressor CTCFL (Ctcfl).